We begin with the raw amino-acid sequence, 494 residues long: Sugar phosphate exchanger 3 (494 aa).

Residues 10–30 (GALLTSFSHHHLAVFLLTFFS) form a helical membrane-spanning segment. Residue N58 is glycosylated (N-linked (GlcNAc...) asparagine). 5 helical membrane passes run 81–101 (TLFL…GLFI), 113–133 (WVLS…GTLT), 146–166 (GLWI…VAVM), 177–197 (VVFG…AFLA), and 209–229 (FLVT…GLLV). The interval 240–261 (GAEESSEEDSQRPLIDGAENED) is disordered. A run of 6 helical transmembrane segments spans residues 297-317 (LAYA…PFYL), 333-353 (IWYD…SDVL), 357-377 (APVL…YSRS), 386-406 (LLMT…SSAI), 428-448 (GIVD…VSLI), and 457-477 (VFYF…PLIV).

It belongs to the major facilitator superfamily. Organophosphate:Pi antiporter (OPA) (TC 2.A.1.4) family. In terms of assembly, interacts with ATRAID; the interaction is direct and both proteins are mutually dependent for their stability. Post-translationally, glycosylated.

It localises to the endoplasmic reticulum membrane. It is found in the lysosome membrane. Unlike the other SLC37 members, lacks glucose-6-phosphate antiporter activity. In osteoclasts, forms a transporter complex with ATRAID for nitrogen-containing-bisphophonates (N-BPs) required for releasing N-BP molecules that have trafficked to lysosomes through fluid-phase endocytosis into the cytosol. The polypeptide is Sugar phosphate exchanger 3 (Slc37a3) (Mus musculus (Mouse)).